The following is a 299-amino-acid chain: Transcription factor BHLH148 (299 aa).

A disordered region spans residues 90–127; that stretch reads RMGGGGGGGEKGEGEEMEEEEEVPQRRRRGQGADVESS. The segment covering 102-111 has biased composition (acidic residues); sequence EGEEMEEEEE. The basic motif; degenerate stretch occupies residues 127 to 140; it reads SRGFRHMMRERQRR. In terms of domain architecture, bHLH spans 127–176; the sequence is SRGFRHMMRERQRREKLSQSYADLYAMVSSRSKGDKNSIVQSAAIYIHEL. The helix-loop-helix motif stretch occupies residues 141–176; sequence EKLSQSYADLYAMVSSRSKGDKNSIVQSAAIYIHEL. The segment at 273–299 is disordered; it reads ERNQPDSDAPFPGSKGWTQTSHVQNVF. The span at 288-299 shows a compositional bias: polar residues; sequence GWTQTSHVQNVF.

Belongs to the bHLH protein family. As to quaternary structure, interacts with TIFY10A/JAZ6, TIFY10B/JAZ7, TIFY11A/JAZ9, TIFY11C/JAZ11, and TIFY11D/JAZ12.

It localises to the nucleus. Its function is as follows. May act on an initial response of jasmonate-regulated gene expression toward drought tolerance as part of a BHLH148-TIFY11D/JAZ12-COI1A complex. The polypeptide is Transcription factor BHLH148 (Oryza sativa subsp. japonica (Rice)).